Reading from the N-terminus, the 124-residue chain is Glutaredoxin-2 (124 aa).

A disulfide bridge connects residues cysteine 13 and cysteine 16.

It belongs to the glutaredoxin family. In terms of assembly, homodimer.

The protein localises to the host cytoplasm. In terms of biological role, glutaredoxin necessary for virion morphogenesis and virus replication. Functions as a thiol-disulfide transfer protein between membrane-associated OPG128 and substrates OPG095 or OPG053. The complete pathway for formation of disulfide bonds in intracellular virion membrane proteins sequentially involves oxidation of OPG072, OPG128 and OPG088. Exhibit thioltransferase and dehydroascorbate reductase activities in vitro. The chain is Glutaredoxin-2 (OPG088) from Homo sapiens (Human).